Reading from the N-terminus, the 305-residue chain is Acyl transferase (305 aa).

Active-site charge relay system residues include Ser-116, Asp-213, and His-243.

The protein belongs to the LuxD family.

It participates in lipid metabolism; fatty acid reduction for biolumincescence. Its function is as follows. Acyl transferase is part of the fatty acid reductase system required for aldehyde biosynthesis; it produces fatty acids for the luminescent reaction. The chain is Acyl transferase from Shewanella woodyi (strain ATCC 51908 / MS32).